A 73-amino-acid polypeptide reads, in one-letter code: Large ribosomal subunit protein bL31 (73 aa).

It belongs to the bacterial ribosomal protein bL31 family. Type A subfamily. Part of the 50S ribosomal subunit.

In terms of biological role, binds the 23S rRNA. The protein is Large ribosomal subunit protein bL31 (rpmE) of Jannaschia sp. (strain CCS1).